The primary structure comprises 362 residues: Class I histocompatibility antigen, Gogo-OKO alpha chain (362 aa).

A signal peptide spans 1–24 (MAVVAPRTLLLLLSGTLALTRTWA). Residues 25–114 (GSHSMRYFYT…LRGYYNQSEG (90 aa)) form an alpha-1 region. The Extracellular segment spans residues 25–308 (GSHSMRYFYT…EPSSQPTIPI (284 aa)). Asn-110 is a glycosylation site (N-linked (GlcNAc...) asparagine). The alpha-2 stretch occupies residues 115 to 206 (GSHTIQRMYG…ENGKETLQRT (92 aa)). 2 disulfides stabilise this stretch: Cys-125–Cys-188 and Cys-227–Cys-283. Residues 207–298 (DPPKTHMTHH…GLPKPLTLRW (92 aa)) are alpha-3. An Ig-like C1-type domain is found at 209–295 (PKTHMTHHPV…QHEGLPKPLT (87 aa)). The interval 299-308 (EPSSQPTIPI) is connecting peptide. A helical membrane pass occupies residues 309-332 (VGIIAGLVLLGAVITGAVVAAMMW). The Cytoplasmic portion of the chain corresponds to 333–362 (RKKSSGRKGGSYSQAASSDSAQGSDVSLTA). Residues 337 to 362 (SGRKGGSYSQAASSDSAQGSDVSLTA) form a disordered region. Positions 342 to 362 (GSYSQAASSDSAQGSDVSLTA) are enriched in low complexity.

This sequence belongs to the MHC class I family. In terms of assembly, heterodimer of an alpha chain and a beta chain (beta-2-microglobulin).

Its subcellular location is the membrane. Functionally, involved in the presentation of foreign antigens to the immune system. This is Class I histocompatibility antigen, Gogo-OKO alpha chain from Gorilla gorilla gorilla (Western lowland gorilla).